Here is a 948-residue protein sequence, read N- to C-terminus: Bifunctional glutamine synthetase adenylyltransferase/adenylyl-removing enzyme (948 aa).

The adenylyl removase stretch occupies residues 1–447; that stretch reads MLTPDNKLMS…EFQQVVGAES (447 aa). The tract at residues 453 to 948 is adenylyl transferase; sequence EQGLQVLWQD…NCWNHLLEDD (496 aa).

This sequence belongs to the GlnE family. Mg(2+) is required as a cofactor.

It catalyses the reaction [glutamine synthetase]-O(4)-(5'-adenylyl)-L-tyrosine + phosphate = [glutamine synthetase]-L-tyrosine + ADP. The enzyme catalyses [glutamine synthetase]-L-tyrosine + ATP = [glutamine synthetase]-O(4)-(5'-adenylyl)-L-tyrosine + diphosphate. Involved in the regulation of glutamine synthetase GlnA, a key enzyme in the process to assimilate ammonia. When cellular nitrogen levels are high, the C-terminal adenylyl transferase (AT) inactivates GlnA by covalent transfer of an adenylyl group from ATP to specific tyrosine residue of GlnA, thus reducing its activity. Conversely, when nitrogen levels are low, the N-terminal adenylyl removase (AR) activates GlnA by removing the adenylyl group by phosphorolysis, increasing its activity. The regulatory region of GlnE binds the signal transduction protein PII (GlnB) which indicates the nitrogen status of the cell. This chain is Bifunctional glutamine synthetase adenylyltransferase/adenylyl-removing enzyme, found in Idiomarina loihiensis (strain ATCC BAA-735 / DSM 15497 / L2-TR).